A 535-amino-acid polypeptide reads, in one-letter code: Solute carrier family 22 member 7 (535 aa).

A run of 12 helical transmembrane segments spans residues 21-41, 144-164, 178-198, 202-222, 232-252, 257-277, 344-364, 375-395, 402-422, 429-449, 464-484, and 489-509; these read LVLM…PVFM, ITST…GYLS, VSSL…MFVV, LTGS…LEWL, VIST…GYLI, WLLL…WWVP, ISLC…GLTL, QTQL…YFLV, LTEA…LLVS, ITAL…TAYL, LGLT…AALL, and LLLP…TALL.

It belongs to the major facilitator (TC 2.A.1) superfamily. Organic cation transporter (TC 2.A.1.19) family. As to expression, expressed in liver and kidney. Expressed at low levels in adipose tissue. Expressed in fetal liver. In kidney, expressed at the brush border of the proximal tubule S3 segment (S3) in the outer stripe and medullary rays. In kidney, expression is higher in female than male.

The protein resides in the basolateral cell membrane. Its subcellular location is the apical cell membrane. The protein localises to the cell membrane. The enzyme catalyses orotate(out) + L-glutamate(in) = orotate(in) + L-glutamate(out). It catalyses the reaction 3',5'-cyclic GMP(in) = 3',5'-cyclic GMP(out). The catalysed reaction is GMP(in) = GMP(out). It carries out the reaction 2'-deoxyguanosine(in) = 2'-deoxyguanosine(out). The enzyme catalyses GDP(in) = GDP(out). It catalyses the reaction guanosine(in) = guanosine(out). The catalysed reaction is GTP(in) = GTP(out). It carries out the reaction 3',5'-cyclic AMP(in) = 3',5'-cyclic AMP(out). The enzyme catalyses creatinine(in) = creatinine(out). It catalyses the reaction prostaglandin E2(out) = prostaglandin E2(in). The catalysed reaction is 2-oxoglutarate(in) = 2-oxoglutarate(out). It carries out the reaction glutarate(in) = glutarate(out). The enzyme catalyses urate(out) = urate(in). It catalyses the reaction estrone 3-sulfate(out) = estrone 3-sulfate(in). Functionally, functions as a Na(+)-independent bidirectional multispecific transporter. Contributes to the renal and hepatic elimination of endogenous organic compounds from the systemic circulation into the urine and bile, respectively. Capable of transporting a wide range of purine and pyrimidine nucleobases, nucleosides, and nucleotides with cGMP, 2'deoxyguanosine and GMP being the preferred substrates. Functions as a pH- and chloride-independent cGMP bidirectional facilitative transporter that can regulate both intracellular and extracellular levels of cGMP and may be involved in cGMP signaling pathways. Mediates orotate/glutamate bidirectional exchange and most likely display a physiological role in hepatic release of glutamate into the blood. Involved in renal secretion and possible reabsorption of creatinine. Able to uptake prostaglandin E2 (PGE2) and may contribute to PGE2 renal excretion. Also transports alpha-ketoglutarate and urate. Apart from the orotate/glutamate exchange, the counterions for the uptake of other SLC22A7/OAT2 substrates remain to be identified. This Rattus norvegicus (Rat) protein is Solute carrier family 22 member 7.